A 361-amino-acid chain; its full sequence is tRNA-specific 2-thiouridylase MnmA (361 aa).

ATP-binding positions include 11–18 and methionine 37; that span reads GMSGGVDS. An interaction with target base in tRNA region spans residues 97–99; the sequence is NPD. Cysteine 102 functions as the Nucleophile in the catalytic mechanism. Residues cysteine 102 and cysteine 199 are joined by a disulfide bond. An ATP-binding site is contributed by glycine 126. The interaction with tRNA stretch occupies residues 149-151; it reads KDQ. Cysteine 199 serves as the catalytic Cysteine persulfide intermediate. Residues 311-312 are interaction with tRNA; the sequence is RY.

Belongs to the MnmA/TRMU family.

Its subcellular location is the cytoplasm. The catalysed reaction is S-sulfanyl-L-cysteinyl-[protein] + uridine(34) in tRNA + AH2 + ATP = 2-thiouridine(34) in tRNA + L-cysteinyl-[protein] + A + AMP + diphosphate + H(+). In terms of biological role, catalyzes the 2-thiolation of uridine at the wobble position (U34) of tRNA, leading to the formation of s(2)U34. This chain is tRNA-specific 2-thiouridylase MnmA, found in Cupriavidus taiwanensis (strain DSM 17343 / BCRC 17206 / CCUG 44338 / CIP 107171 / LMG 19424 / R1) (Ralstonia taiwanensis (strain LMG 19424)).